The following is a 447-amino-acid chain: Asparagine--tRNA ligase (447 aa).

The protein belongs to the class-II aminoacyl-tRNA synthetase family. As to quaternary structure, homodimer.

Its subcellular location is the cytoplasm. It carries out the reaction tRNA(Asn) + L-asparagine + ATP = L-asparaginyl-tRNA(Asn) + AMP + diphosphate + H(+). This is Asparagine--tRNA ligase from Streptococcus pneumoniae (strain ATCC BAA-255 / R6).